The primary structure comprises 67 residues: Large ribosomal subunit protein uL29 (67 aa).

The protein belongs to the universal ribosomal protein uL29 family.

In Clostridium acetobutylicum (strain ATCC 824 / DSM 792 / JCM 1419 / IAM 19013 / LMG 5710 / NBRC 13948 / NRRL B-527 / VKM B-1787 / 2291 / W), this protein is Large ribosomal subunit protein uL29.